The sequence spans 497 residues: Cobyric acid synthase (497 aa).

The region spanning 251-443 (DLKIGVVWYP…LHGLFDNDFF (193 aa)) is the GATase cobBQ-type domain. The Nucleophile role is filled by C333. H435 is a catalytic residue.

This sequence belongs to the CobB/CobQ family. CobQ subfamily.

It functions in the pathway cofactor biosynthesis; adenosylcobalamin biosynthesis. In terms of biological role, catalyzes amidations at positions B, D, E, and G on adenosylcobyrinic A,C-diamide. NH(2) groups are provided by glutamine, and one molecule of ATP is hydrogenolyzed for each amidation. This is Cobyric acid synthase from Carboxydothermus hydrogenoformans (strain ATCC BAA-161 / DSM 6008 / Z-2901).